We begin with the raw amino-acid sequence, 153 residues long: ATP synthase subunit b' (153 aa).

Residues 23-40 (LMAIQVVALTYILNSLFF) traverse the membrane as a helical segment.

It belongs to the ATPase B chain family. In terms of assembly, F-type ATPases have 2 components, F(1) - the catalytic core - and F(0) - the membrane proton channel. F(1) has five subunits: alpha(3), beta(3), gamma(1), delta(1), epsilon(1). F(0) has four main subunits: a(1), b(1), b'(1) and c(10-14). The alpha and beta chains form an alternating ring which encloses part of the gamma chain. F(1) is attached to F(0) by a central stalk formed by the gamma and epsilon chains, while a peripheral stalk is formed by the delta, b and b' chains.

Its subcellular location is the cellular thylakoid membrane. Functionally, f(1)F(0) ATP synthase produces ATP from ADP in the presence of a proton or sodium gradient. F-type ATPases consist of two structural domains, F(1) containing the extramembraneous catalytic core and F(0) containing the membrane proton channel, linked together by a central stalk and a peripheral stalk. During catalysis, ATP synthesis in the catalytic domain of F(1) is coupled via a rotary mechanism of the central stalk subunits to proton translocation. Its function is as follows. Component of the F(0) channel, it forms part of the peripheral stalk, linking F(1) to F(0). The b'-subunit is a diverged and duplicated form of b found in plants and photosynthetic bacteria. The sequence is that of ATP synthase subunit b' from Prochlorococcus marinus (strain AS9601).